We begin with the raw amino-acid sequence, 129 residues long: Large ribosomal subunit protein bL17 (129 aa).

This sequence belongs to the bacterial ribosomal protein bL17 family. Part of the 50S ribosomal subunit. Contacts protein L32.

This is Large ribosomal subunit protein bL17 from Serratia proteamaculans (strain 568).